Consider the following 508-residue polypeptide: Photosystem II CP47 reaction center protein (508 aa).

6 helical membrane-spanning segments follow: residues 21 to 36 (SVHIMHTALVAGWAGS), 101 to 115 (IVFSGLCFLAAIWHW), 140 to 156 (GIHLFLAGVACFGFGAF), 203 to 218 (IAAGTLGILAGLFHLS), 237 to 252 (VLSSSIAAVFFAAFVV), and 457 to 472 (SFALLFFFGHIWHGAR).

The protein belongs to the PsbB/PsbC family. PsbB subfamily. In terms of assembly, PSII is composed of 1 copy each of membrane proteins PsbA, PsbB, PsbC, PsbD, PsbE, PsbF, PsbH, PsbI, PsbJ, PsbK, PsbL, PsbM, PsbT, PsbX, PsbY, PsbZ, Psb30/Ycf12, at least 3 peripheral proteins of the oxygen-evolving complex and a large number of cofactors. It forms dimeric complexes. It depends on Binds multiple chlorophylls. PSII binds additional chlorophylls, carotenoids and specific lipids. as a cofactor.

The protein localises to the plastid. Its subcellular location is the chloroplast thylakoid membrane. Functionally, one of the components of the core complex of photosystem II (PSII). It binds chlorophyll and helps catalyze the primary light-induced photochemical processes of PSII. PSII is a light-driven water:plastoquinone oxidoreductase, using light energy to abstract electrons from H(2)O, generating O(2) and a proton gradient subsequently used for ATP formation. The protein is Photosystem II CP47 reaction center protein of Phaseolus vulgaris (Kidney bean).